We begin with the raw amino-acid sequence, 613 residues long: GPI mannosyltransferase 3 (613 aa).

An N-linked (GlcNAc...) asparagine glycan is attached at asparagine 19. 12 helical membrane passes run 22-42 (FFLR…ATFF), 83-103 (LFAG…PVGI), 106-126 (ATIL…LGDW), 132-152 (AVSI…LQIF), 168-188 (LEMT…LGVA), 216-236 (LAVV…LFTI), 252-272 (VVTL…ISAA), 280-300 (FWTF…LAVF), 309-329 (YFLQ…VASL), 342-362 (FNVL…LSLI), 369-389 (FIYP…ASFF), and 411-431 (YLFV…FFHQ).

The protein belongs to the glycosyltransferase 22 family. PIGB subfamily.

It is found in the endoplasmic reticulum membrane. It participates in glycolipid biosynthesis; glycosylphosphatidylinositol-anchor biosynthesis. Its function is as follows. Mannosyltransferase involved in glycosylphosphatidylinositol-anchor biosynthesis. Transfers the third mannose to Man2-GlcN-acyl-PI during GPI precursor assembly. The protein is GPI mannosyltransferase 3 (GPI10) of Gibberella zeae (strain ATCC MYA-4620 / CBS 123657 / FGSC 9075 / NRRL 31084 / PH-1) (Wheat head blight fungus).